We begin with the raw amino-acid sequence, 278 residues long: 4-deoxy-L-threo-5-hexosulose-uronate ketol-isomerase (278 aa).

Residues His196, His198, Glu203, and His245 each coordinate Zn(2+).

Belongs to the KduI family. As to quaternary structure, homohexamer. Zn(2+) is required as a cofactor.

It carries out the reaction 5-dehydro-4-deoxy-D-glucuronate = 3-deoxy-D-glycero-2,5-hexodiulosonate. It participates in glycan metabolism; pectin degradation; 2-dehydro-3-deoxy-D-gluconate from pectin: step 4/5. Functionally, catalyzes the isomerization of 5-dehydro-4-deoxy-D-glucuronate to 3-deoxy-D-glycero-2,5-hexodiulosonate. This is 4-deoxy-L-threo-5-hexosulose-uronate ketol-isomerase from Escherichia coli O139:H28 (strain E24377A / ETEC).